We begin with the raw amino-acid sequence, 881 residues long: DNA mismatch repair protein MutS (881 aa).

605 to 612 (GPNMSGKS) is an ATP binding site.

The protein belongs to the DNA mismatch repair MutS family.

In terms of biological role, this protein is involved in the repair of mismatches in DNA. It is possible that it carries out the mismatch recognition step. This protein has a weak ATPase activity. The sequence is that of DNA mismatch repair protein MutS from Limosilactobacillus reuteri subsp. reuteri (strain JCM 1112) (Lactobacillus reuteri).